A 624-amino-acid polypeptide reads, in one-letter code: LEAF RUST 10 DISEASE-RESISTANCE LOCUS RECEPTOR-LIKE PROTEIN KINASE-like 2.2 (624 aa).

The signal sequence occupies residues 1–30 (MDYLSSMGSQTARFCLILLFLFYYLPCALS). Over 31-263 (QDDLWGCGTP…IPNTRSILIT (233 aa)) the chain is Extracellular. 6 N-linked (GlcNAc...) asparagine glycosylation sites follow: Asn45, Asn75, Asn85, Asn95, Asn150, and Asn164. A helical transmembrane segment spans residues 264-284 (IGQVVGFHVFIIVVMIIAFLF). Over 285-624 (WRRKKVNDLR…EEDSSIYSEV (340 aa)) the chain is Cytoplasmic. The Protein kinase domain occupies 317-599 (KSFTEVVGRG…SLDPPPKPLL (283 aa)). Residues 323–331 (VGRGGFGTV) and Lys345 contribute to the ATP site. The Proton acceptor role is filled by Asp434. The interval 587 to 624 (NLDSLDPPPKPLLHMPMQNNNAESSQPSEEDSSIYSEV) is disordered. Polar residues predominate over residues 603 to 624 (MQNNNAESSQPSEEDSSIYSEV).

The protein belongs to the protein kinase superfamily. Ser/Thr protein kinase family.

It is found in the membrane. The catalysed reaction is L-seryl-[protein] + ATP = O-phospho-L-seryl-[protein] + ADP + H(+). The enzyme catalyses L-threonyl-[protein] + ATP = O-phospho-L-threonyl-[protein] + ADP + H(+). The chain is LEAF RUST 10 DISEASE-RESISTANCE LOCUS RECEPTOR-LIKE PROTEIN KINASE-like 2.2 from Arabidopsis thaliana (Mouse-ear cress).